Here is an 871-residue protein sequence, read N- to C-terminus: DNA mismatch repair protein MutS (871 aa).

Residue glycine 621–serine 628 participates in ATP binding.

It belongs to the DNA mismatch repair MutS family.

This protein is involved in the repair of mismatches in DNA. It is possible that it carries out the mismatch recognition step. This protein has a weak ATPase activity. The chain is DNA mismatch repair protein MutS from Geobacter sulfurreducens (strain ATCC 51573 / DSM 12127 / PCA).